The chain runs to 494 residues: UPF0371 protein M28_Spy1076 (494 aa).

This sequence belongs to the UPF0371 family.

This chain is UPF0371 protein M28_Spy1076, found in Streptococcus pyogenes serotype M28 (strain MGAS6180).